The following is a 425-amino-acid chain: MADKEAAFDDAVEERVINEEYKIWKKNTPFLYDLVMTHALEWPSLTAQWLPDVTRPEGKDFSIHRLVLGTHTSDEQNHLVIASVQLPNDDAQFDASHYDSEKGEFGGFGSVSGKIEIEIKINHEGEVNRARYMPQNPCIIATKTPSSDVLVFDYTKHPSKPDPSGECNPDLRLRGHQKEGYGLSWNPNLSGHLLSASDDHTICLWDISAVPKEGKVVDAKTIFTGHTAVVEDVSWHLLHESLFGSVADDQKLMIWDTRSNNTSKPSHSVDAHTAEVNCLSFNPYSEFILATGSADKTVALWDLRNLKLKLHSFESHKDEIFQVQWSPHNETILASSGTDRRLNVWDLSKIGEEQSPEDAEDGPPELLFIHGGHTAKISDFSWNPNEPWVICSVSEDNIMQVWQMAENIYNDEDPEGSVDPEGQGS.

Ala2 carries the N-acetylalanine modification. Lys4 is modified (N6-acetyllysine; alternate). Lys4 participates in a covalent cross-link: Glycyl lysine isopeptide (Lys-Gly) (interchain with G-Cter in SUMO2); alternate. Residue Lys4 forms a Glycyl lysine isopeptide (Lys-Gly) (interchain with G-Cter in ubiquitin); alternate linkage. WD repeat units follow at residues 32 to 125 (YDLV…NHEG), 126 to 175 (EVNR…RLRG), 176 to 223 (HQKE…KTIF), 225 to 270 (GHTA…HSVD), 271 to 314 (AHTA…HSFE), 315 to 371 (SHKD…FIHG), and 372 to 404 (GHTA…VWQM). Phosphoserine is present on Ser110. Residue Lys160 is modified to N6-acetyllysine; alternate. Residue Lys160 forms a Glycyl lysine isopeptide (Lys-Gly) (interchain with G-Cter in SUMO2); alternate linkage. Ser355 carries the post-translational modification Phosphoserine.

This sequence belongs to the WD repeat RBAP46/RBAP48/MSI1 family. As to quaternary structure, binds directly to helix 1 of the histone fold of histone H4, a region that is not accessible when H4 is in chromatin. Subunit of the chromatin assembly factor 1 (CAF-1) complex, which is composed of RBBP4, CHAF1B and CHAF1A. Subunit of the core histone deacetylase (HDAC) complex, which is composed of HDAC1, HDAC2, RBBP4 and RBBP7. The core HDAC complex associates with SIN3A, ARID4B/SAP180, SAP18, SAP30, SAP130, SUDS3/SAP45 and possibly ARID4A/RBP1 and ING1 to form the SIN3 HDAC complex. Component of the nucleosome remodeling and deacetylase (NuRD) repressor complex, composed of core proteins MTA1, MTA2, MTA3, RBBP4, RBBP7, HDAC1, HDAC2, MBD2, MBD3, and peripherally associated proteins CDK2AP1, CDK2AP2, GATAD2A, GATAD2B, CHD3, CHD4 and CHD5. The exact stoichiometry of the NuRD complex is unknown, and some subunits such as MBD2 and MBD3, GATAD2A and GATAD2B, and CHD3, CHD4 and CHD5 define mutually exclusive NuRD complexes. Interacts with ZNF512B; the interaction is direct and may play a role in repressing gene expression. The NuRD complex may also interact with MBD3L1 and MBD3L2. Component of the PRC2 complex, which consists of the core subunits EED, EZH1 or EZH2, SUZ12, and RBBP4, and various combinations of accessory subunits including AEBP2, JARID2, PHF19, MTF2 and EPOP. Forms a monomeric PRC2.2 (class 2) complex consisting of at least SUZ12, RBBP4, AEBP2 and JARID2. Forms a dimeric PRC2.1 (class 1, PRC-PCL) complex consisting of at least SUZ12, RBBP4, and PHF19; PHF19 stabilizes the dimeric structure which enhances PRC2 interaction with chromatin. Component of the NURF-1 ISWI chromatin remodeling complex (also called the nucleosome-remodeling factor (NURF) complex) at least composed of SMARCA1 (isoform 2), BPTF, RBBP4 and RBBP7. Within the complex interacts with isoform 2 of SMARCA1. Component of the BPFT-SMARCA1 complex at least composed of SMARCA1 (isoform 1), BPFT, RBBP4 and RBBP7; the complex is catalytically inactive and does not remodel chromatin. Within the complex interacts with isoform 1 of SMARCA1. Interacts with the ISWI chromatin remodeling complex component SMARCA5; the interaction is direct. Interacts with the viral protein-binding domain of the retinoblastoma protein (RB1). Component of the DREAM complex (also named LINC complex) at least composed of E2F4, E2F5, LIN9, LIN37, LIN52, LIN54, MYBL1, MYBL2, RBL1, RBL2, RBBP4, TFDP1 and TFDP2. The complex exists in quiescent cells where it represses cell cycle-dependent genes. It dissociates in S phase when LIN9, LIN37, LIN52 and LIN54 form a subcomplex that binds to MYBL2. Found in a complex composed of at least SINHCAF, SIN3A, HDAC1, SAP30, RBBP4, OGT and TET1. Interacts with ZNF827; the interaction is direct and recruits RBBP4 to telomeres. Interacts with MTA1; the interaction is direct and mutually exclusive with binding histone H4. Interacts with ARMC12 (via ARM domains). Interacts with BRCA1. Interacts with CDK2AP1. Interacts with CREBBP, and this interaction may be enhanced by the binding of phosphorylated CREB1 to CREBBP. Interacts with ERCC6. Interacts with HDAC7. Interacts with PHF6. Interacts with PWWP2B. Interacts with SPEN/MINT. Interacts with SUV39H1.

The protein resides in the nucleus. Its subcellular location is the chromosome. It localises to the telomere. Its function is as follows. Core histone-binding subunit that may target chromatin assembly factors, chromatin remodeling factors and histone deacetylases to their histone substrates in a manner that is regulated by nucleosomal DNA. Component of the chromatin assembly factor 1 (CAF-1) complex, which is required for chromatin assembly following DNA replication and DNA repair. Component of the core histone deacetylase (HDAC) complex, which promotes histone deacetylation and consequent transcriptional repression. Component of the nucleosome remodeling and histone deacetylase complex (the NuRD complex), which promotes transcriptional repression by histone deacetylation and nucleosome remodeling. Component of the PRC2 complex, which promotes repression of homeotic genes during development. Component of the NURF (nucleosome remodeling factor) complex. The protein is Histone-binding protein RBBP4 (RBBP4) of Bos taurus (Bovine).